A 328-amino-acid polypeptide reads, in one-letter code: Interleukin-12 subunit beta (328 aa).

Residues 1–22 form the signal peptide; sequence MCHQQLVISWFSLVFLASPLVA. The region spanning 23–106 is the Ig-like C2-type domain; sequence IWELKKDVYV…LSHSLLLLHK (84 aa). Cystine bridges form between cysteine 50-cysteine 90, cysteine 131-cysteine 142, and cysteine 170-cysteine 193. N-linked (GlcNAc...) asparagine glycosylation is present at asparagine 135. Asparagine 222 carries N-linked (GlcNAc...) asparagine glycosylation. Positions 237-328 constitute a Fibronectin type-III domain; that stretch reads PPKNLQLKPL…WSEWASVPCS (92 aa). Residues cysteine 300 and cysteine 327 are joined by a disulfide bond. Tryptophan 319 carries C-linked (Man) tryptophan glycosylation.

Belongs to the IL-12B family. As to quaternary structure, heterodimer with IL12A; disulfide-linked. The heterodimer is known as interleukin IL-12. Heterodimer with IL23A; disulfide-linked. The heterodimer is known as interleukin IL-23. Also secreted as a monomer. Interacts with NBR1; this interaction promotes IL-12 secretion. In terms of processing, known to be C-mannosylated in the recombinant protein; it is not yet known for sure if the wild-type protein is also modified.

It localises to the secreted. Functionally, cytokine that can act as a growth factor for activated T and NK cells, enhance the lytic activity of NK/lymphokine-activated killer cells, and stimulate the production of IFN-gamma by resting PBMC. Its function is as follows. Associates with IL23A to form the IL-23 interleukin, a heterodimeric cytokine which functions in innate and adaptive immunity. IL-23 may constitute with IL-17 an acute response to infection in peripheral tissues. IL-23 binds to a heterodimeric receptor complex composed of IL12RB1 and IL23R, activates the Jak-Stat signaling cascade, stimulates memory rather than naive T-cells and promotes production of pro-inflammatory cytokines. IL-23 induces autoimmune inflammation and thus may be responsible for autoimmune inflammatory diseases and may be important for tumorigenesis. The chain is Interleukin-12 subunit beta (IL12B) from Homo sapiens (Human).